We begin with the raw amino-acid sequence, 218 residues long: MINLILLGLPGAGKGTASERIVDKYHLTHISTGDMFREAMANKTKVGLEAKSYIDKGNLVPDEVTAKLVEERLSQPDIKEGFILDGFPRTTVQAELLDGITKRLKKPLTNVIALEVDEDTLIKRLSARYMCKNCGATYNKLSKQPKVEGTCDRCGSHEFYQREDDKPEVVKNRLEVNEKMNAPLKDFYQKKGLLTVINGEQTPEKVFEDIDAVLSNNQ.

Position 11–16 (11–16 (GAGKGT)) interacts with ATP. The interval 31–60 (STGDMFREAMANKTKVGLEAKSYIDKGNLV) is NMP. Residues Thr-32, Arg-37, 58–60 (NLV), 86–89 (GFPR), and Gln-93 each bind AMP. An LID region spans residues 127–165 (ARYMCKNCGATYNKLSKQPKVEGTCDRCGSHEFYQREDD). Arg-128 provides a ligand contact to ATP. Positions 131 and 134 each coordinate Zn(2+). Position 137 to 138 (137 to 138 (TY)) interacts with ATP. 2 residues coordinate Zn(2+): Cys-151 and Cys-154. Arg-162 and Arg-173 together coordinate AMP. Gln-201 contributes to the ATP binding site.

The protein belongs to the adenylate kinase family. In terms of assembly, monomer.

The protein resides in the cytoplasm. It carries out the reaction AMP + ATP = 2 ADP. The protein operates within purine metabolism; AMP biosynthesis via salvage pathway; AMP from ADP: step 1/1. Catalyzes the reversible transfer of the terminal phosphate group between ATP and AMP. Plays an important role in cellular energy homeostasis and in adenine nucleotide metabolism. The chain is Adenylate kinase from Lactobacillus helveticus (strain DPC 4571).